We begin with the raw amino-acid sequence, 219 residues long: Cytochrome c oxidase assembly protein CtaG (219 aa).

Residues 1–13 show a composition bias toward polar residues; sequence MDATDQGKSTSTT. The segment at 1-24 is disordered; it reads MDATDQGKSTSTTAAQAAPGKAAP. Over 1-29 the chain is Cytoplasmic; it reads MDATDQGKSTSTTAAQAAPGKAAPRRGIG. Residues 14 to 24 are compositionally biased toward low complexity; it reads AAQAAPGKAAP. The chain crosses the membrane as a helical; Signal-anchor for type II membrane protein span at residues 30-52; sequence RDALVGGICGAVVVLMIGASYAA. Residues 53 to 219 lie on the Periplasmic side of the membrane; the sequence is VPFYNWFCRA…GEPDKPRGSL (167 aa).

It belongs to the COX11/CtaG family.

It localises to the cell inner membrane. In terms of biological role, exerts its effect at some terminal stage of cytochrome c oxidase synthesis, probably by being involved in the insertion of the copper B into subunit I. The protein is Cytochrome c oxidase assembly protein CtaG of Bradyrhizobium sp. (strain ORS 278).